The chain runs to 374 residues: tRNA (guanine(26)-N(2))-dimethyltransferase (374 aa).

Positions Ile-4–Ile-368 constitute a Trm1 methyltransferase domain. Positions 41, 66, 82, 108, and 109 each coordinate S-adenosyl-L-methionine. Cys-237, Cys-240, Cys-256, and Cys-259 together coordinate Zn(2+).

Belongs to the class I-like SAM-binding methyltransferase superfamily. Trm1 family.

The catalysed reaction is guanosine(26) in tRNA + 2 S-adenosyl-L-methionine = N(2)-dimethylguanosine(26) in tRNA + 2 S-adenosyl-L-homocysteine + 2 H(+). Dimethylates a single guanine residue at position 26 of a number of tRNAs using S-adenosyl-L-methionine as donor of the methyl groups. This chain is tRNA (guanine(26)-N(2))-dimethyltransferase, found in Methanoregula boonei (strain DSM 21154 / JCM 14090 / 6A8).